Here is a 239-residue protein sequence, read N- to C-terminus: 4-hydroxy-tetrahydrodipicolinate reductase (239 aa).

NAD(+) contacts are provided by residues 9 to 14, 78 to 80, and 104 to 107; these read GINGKM, GTT, and APNF. The active-site Proton donor/acceptor is the His-134. Residue His-135 participates in (S)-2,3,4,5-tetrahydrodipicolinate binding. Lys-138 functions as the Proton donor in the catalytic mechanism. 144–145 lines the (S)-2,3,4,5-tetrahydrodipicolinate pocket; that stretch reads GT.

It belongs to the DapB family.

It is found in the cytoplasm. It catalyses the reaction (S)-2,3,4,5-tetrahydrodipicolinate + NAD(+) + H2O = (2S,4S)-4-hydroxy-2,3,4,5-tetrahydrodipicolinate + NADH + H(+). The catalysed reaction is (S)-2,3,4,5-tetrahydrodipicolinate + NADP(+) + H2O = (2S,4S)-4-hydroxy-2,3,4,5-tetrahydrodipicolinate + NADPH + H(+). It functions in the pathway amino-acid biosynthesis; L-lysine biosynthesis via DAP pathway; (S)-tetrahydrodipicolinate from L-aspartate: step 4/4. Catalyzes the conversion of 4-hydroxy-tetrahydrodipicolinate (HTPA) to tetrahydrodipicolinate. The polypeptide is 4-hydroxy-tetrahydrodipicolinate reductase (Coxiella burnetii (strain Dugway 5J108-111)).